A 222-amino-acid polypeptide reads, in one-letter code: Endonuclease V (222 aa).

Mg(2+) is bound by residues Asp43 and Asp109.

The protein belongs to the endonuclease V family. Mg(2+) is required as a cofactor.

It localises to the cytoplasm. The enzyme catalyses Endonucleolytic cleavage at apurinic or apyrimidinic sites to products with a 5'-phosphate.. DNA repair enzyme involved in the repair of deaminated bases. Selectively cleaves double-stranded DNA at the second phosphodiester bond 3' to a deoxyinosine leaving behind the intact lesion on the nicked DNA. This is Endonuclease V from Roseiflexus sp. (strain RS-1).